We begin with the raw amino-acid sequence, 349 residues long: MEVEEGRARVKVEGVFYNPRMRFCRDLDMLVFATMDSKEYFDALSASGIRGIRAALEAGKKAVFNDVSPKAVKVIEENLRENGVSGEVINGDAAAVMRQRAFEHIDIDPFGSPAPFMDSACFSAKRYLSVTATDTAALCGSATNSGLKKYGAFAVKTDVYHEVGLRMLIGFVVREATKYEKALFPLISWVREHYYRVHFKIKKSTAMSAKVYEKMGYLAYCSTCLRKKVLGMGEGAERCECGGKFSLIGPIWLGELKQRDFAEKVAEKAEGKLRAFLEKILAEIDAPTAYSLPALAKIHSLTLPPTDVVVEELKKLGYEASRTHYCGFCVKTDADRDVVVKILRSRKII.

Positions 1–343 (MEVEEGRARV…ADRDVVVKIL (343 aa)) constitute a Trm1 methyltransferase domain. The S-adenosyl-L-methionine site is built by R25, R50, D66, D92, and A93.

The protein belongs to the class I-like SAM-binding methyltransferase superfamily. Trm1 family.

The enzyme catalyses guanosine(26) in tRNA + 2 S-adenosyl-L-methionine = N(2)-dimethylguanosine(26) in tRNA + 2 S-adenosyl-L-homocysteine + 2 H(+). In terms of biological role, dimethylates a single guanine residue at position 26 of a number of tRNAs using S-adenosyl-L-methionine as donor of the methyl groups. In Archaeoglobus fulgidus (strain ATCC 49558 / DSM 4304 / JCM 9628 / NBRC 100126 / VC-16), this protein is tRNA (guanine(26)-N(2))-dimethyltransferase.